Reading from the N-terminus, the 366-residue chain is UPF0329 protein ECU01_0130/ECU01_1480/ECU08_0060 (366 aa).

The segment at 325 to 366 is disordered; it reads IRKEEKRIRKEEERAKNEEELLRMVESEEGKSGEGEEGCRRG.

It belongs to the UPF0329 family.

The sequence is that of UPF0329 protein ECU01_0130/ECU01_1480/ECU08_0060 from Encephalitozoon cuniculi (strain GB-M1) (Microsporidian parasite).